The chain runs to 366 residues: Chorismate synthase (366 aa).

2 residues coordinate NADP(+): arginine 48 and arginine 54. FMN is bound by residues 131–133, 243–244, glycine 288, 303–307, and arginine 329; these read RAS, NA, and KPTPS.

It belongs to the chorismate synthase family. Homotetramer. FMNH2 serves as cofactor.

The catalysed reaction is 5-O-(1-carboxyvinyl)-3-phosphoshikimate = chorismate + phosphate. It functions in the pathway metabolic intermediate biosynthesis; chorismate biosynthesis; chorismate from D-erythrose 4-phosphate and phosphoenolpyruvate: step 7/7. Catalyzes the anti-1,4-elimination of the C-3 phosphate and the C-6 proR hydrogen from 5-enolpyruvylshikimate-3-phosphate (EPSP) to yield chorismate, which is the branch point compound that serves as the starting substrate for the three terminal pathways of aromatic amino acid biosynthesis. This reaction introduces a second double bond into the aromatic ring system. This is Chorismate synthase from Bartonella quintana (strain Toulouse) (Rochalimaea quintana).